We begin with the raw amino-acid sequence, 255 residues long: Hydroxyacylglutathione hydrolase (255 aa).

Positions 56, 58, 60, 61, 114, 133, and 171 each coordinate Zn(2+).

The protein belongs to the metallo-beta-lactamase superfamily. Glyoxalase II family. In terms of assembly, monomer. Zn(2+) is required as a cofactor.

It carries out the reaction an S-(2-hydroxyacyl)glutathione + H2O = a 2-hydroxy carboxylate + glutathione + H(+). Its pathway is secondary metabolite metabolism; methylglyoxal degradation; (R)-lactate from methylglyoxal: step 2/2. Thiolesterase that catalyzes the hydrolysis of S-D-lactoyl-glutathione to form glutathione and D-lactic acid. The polypeptide is Hydroxyacylglutathione hydrolase (Rhodopseudomonas palustris (strain HaA2)).